A 241-amino-acid chain; its full sequence is Probable cobalt-factor III C(17)-methyltransferase (241 aa).

This sequence belongs to the precorrin methyltransferase family.

The enzyme catalyses Co(II)-factor III + S-adenosyl-L-methionine + H(+) = Co(II)-factor IV + S-adenosyl-L-homocysteine. The protein operates within cofactor biosynthesis; adenosylcobalamin biosynthesis; cob(II)yrinate a,c-diamide from sirohydrochlorin (anaerobic route): step 3/10. Functionally, methyltransferase that likely catalyzes the ring contraction and methylation of C-17 in cobalt-factor III to form cobalt-factor IV. May also convert cobalt-precorrin-3 to cobalt-precorrin-4. This is Probable cobalt-factor III C(17)-methyltransferase (cbiH) from Salmonella typhimurium (strain LT2 / SGSC1412 / ATCC 700720).